Reading from the N-terminus, the 337-residue chain is Glucokinase (337 aa).

Residue 11-16 participates in ATP binding; that stretch reads ADIGGT.

The protein belongs to the bacterial glucokinase family.

Its subcellular location is the cytoplasm. It catalyses the reaction D-glucose + ATP = D-glucose 6-phosphate + ADP + H(+). This is Glucokinase from Xylella fastidiosa (strain M12).